Here is a 127-residue protein sequence, read N- to C-terminus: Large ribosomal subunit protein eL24 (127 aa).

A disordered region spans residues 93-127 (KRAQKPEVKQAAAEQAKREIKEKKKAAAKKAAPKK). Positions 115-127 (KKKAAAKKAAPKK) are enriched in basic residues.

This sequence belongs to the eukaryotic ribosomal protein eL24 family.

This is Large ribosomal subunit protein eL24 (rpl24) from Dictyostelium discoideum (Social amoeba).